We begin with the raw amino-acid sequence, 364 residues long: DNA polymerase IV (364 aa).

Residues 8 to 189 (IIHIDMDCYF…LPLTKIPGVG (182 aa)) enclose the UmuC domain. Positions 12 and 107 each coordinate Mg(2+). Glu108 is an active-site residue.

Belongs to the DNA polymerase type-Y family. In terms of assembly, monomer. The cofactor is Mg(2+).

The protein localises to the cytoplasm. The enzyme catalyses DNA(n) + a 2'-deoxyribonucleoside 5'-triphosphate = DNA(n+1) + diphosphate. Its function is as follows. Poorly processive, error-prone DNA polymerase involved in untargeted mutagenesis. Copies undamaged DNA at stalled replication forks, which arise in vivo from mismatched or misaligned primer ends. These misaligned primers can be extended by PolIV. Exhibits no 3'-5' exonuclease (proofreading) activity. May be involved in translesional synthesis, in conjunction with the beta clamp from PolIII. The protein is DNA polymerase IV of Shewanella woodyi (strain ATCC 51908 / MS32).